The following is a 207-amino-acid chain: MEAMITKEFFESKTTIELARDILGMRLVHQTNEGLLSGLIVETEAYLGATDMAAHSFQNLRTKRTEVMFSSPGTIYMYQMHRQVLLNFITMPKGIPEAILIRAIEPDEQAKQQMTQNRHGKTGYELTNGPGKLTQALGLSMQDYGKTLFDSNIWLEEAKLPHLIEATNRIGVPNKGIATHYPLRFTVKGSPYISGQRKNSIRTGIWK.

Belongs to the DNA glycosylase MPG family.

This Listeria monocytogenes serovar 1/2a (strain ATCC BAA-679 / EGD-e) protein is Putative 3-methyladenine DNA glycosylase.